The following is a 200-amino-acid chain: Small ribosomal subunit protein uS4 (200 aa).

The interval 22-42 is disordered; that stretch reads TGKELEKRPYAPGPHGPNQRK. One can recognise an S4 RNA-binding domain in the interval 92–152; sequence ARLDNLVYRM…EKSNNLVVVK (61 aa).

It belongs to the universal ribosomal protein uS4 family. As to quaternary structure, part of the 30S ribosomal subunit. Contacts protein S5. The interaction surface between S4 and S5 is involved in control of translational fidelity.

Its function is as follows. One of the primary rRNA binding proteins, it binds directly to 16S rRNA where it nucleates assembly of the body of the 30S subunit. In terms of biological role, with S5 and S12 plays an important role in translational accuracy. This is Small ribosomal subunit protein uS4 from Bacillus thuringiensis subsp. konkukian (strain 97-27).